Here is a 940-residue protein sequence, read N- to C-terminus: Isoleucine--tRNA ligase (940 aa).

The 'HIGH' region signature appears at 58–68; sequence PYANGSIHIGH. Glu-564 is an L-isoleucyl-5'-AMP binding site. Residues 605 to 609 carry the 'KMSKS' region motif; that stretch reads KMSKS. Lys-608 provides a ligand contact to ATP. Zn(2+) is bound by residues Cys-903, Cys-906, Cys-923, and Cys-926.

The protein belongs to the class-I aminoacyl-tRNA synthetase family. IleS type 1 subfamily. Monomer. Zn(2+) serves as cofactor.

The protein localises to the cytoplasm. The enzyme catalyses tRNA(Ile) + L-isoleucine + ATP = L-isoleucyl-tRNA(Ile) + AMP + diphosphate. Functionally, catalyzes the attachment of isoleucine to tRNA(Ile). As IleRS can inadvertently accommodate and process structurally similar amino acids such as valine, to avoid such errors it has two additional distinct tRNA(Ile)-dependent editing activities. One activity is designated as 'pretransfer' editing and involves the hydrolysis of activated Val-AMP. The other activity is designated 'posttransfer' editing and involves deacylation of mischarged Val-tRNA(Ile). In Shewanella baltica (strain OS185), this protein is Isoleucine--tRNA ligase.